Reading from the N-terminus, the 137-residue chain is Large ribosomal subunit protein uL16c (137 aa).

The segment covering 1 to 17 has biased composition (basic residues); the sequence is MLSPKKTRFRRQHRGRM. The disordered stretch occupies residues 1-21; it reads MLSPKKTRFRRQHRGRMKGLS.

Belongs to the universal ribosomal protein uL16 family. In terms of assembly, part of the 50S ribosomal subunit.

The protein resides in the plastid. The protein is Large ribosomal subunit protein uL16c of Cuscuta obtusiflora (Peruvian dodder).